Consider the following 448-residue polypeptide: MKSDTIAAIATAPGRGGVGVIRISGSNLLPFAFALTEKTPKPRYASLADFKAADGSTIDTGLLLYFPNPQSFTGEDVLELQGHGGPVVMQMLLARCLDLGARLAEPGEFSRRAFLNGKMDLAQAEAVADLIDAATASAARSAVRSLQGEFSRAIGELNDELINLRMLVEATLDFPEEDIDFLKAANAFGRLERLQLKLAEIFDRAGQGKLLQSGLHVVLAGQPNVGKSSLLNRLAGDDLAIVTPIAGTTRDALRSTIQIEGIPLHIIDTAGLRETDDEVEKIGIERSWKEIERSDVVLLLVDARTGVSESDREILARLPDRLQRITVYNKIDLTHRAAERHDEANGTAISLSAKANQGIELLRQELLRIAGWHQAEDVFIARERHLRALSAAQEHVAAARNVVEGALPALELFAEELRLAQQSLGEITGEFTADDLLGVIFSRFCIGK.

Positions 22, 79, and 118 each coordinate (6S)-5-formyl-5,6,7,8-tetrahydrofolate. The TrmE-type G domain occupies 214-371 (GLHVVLAGQP…LRQELLRIAG (158 aa)). Position 224 (Asn-224) interacts with K(+). Residues 224–229 (NVGKSS), 243–249 (TPIAGTT), and 268–271 (DTAG) each bind GTP. Ser-228 provides a ligand contact to Mg(2+). K(+) is bound by residues Thr-243, Ile-245, and Thr-248. A Mg(2+)-binding site is contributed by Thr-249. Lys-448 contacts (6S)-5-formyl-5,6,7,8-tetrahydrofolate.

It belongs to the TRAFAC class TrmE-Era-EngA-EngB-Septin-like GTPase superfamily. TrmE GTPase family. Homodimer. Heterotetramer of two MnmE and two MnmG subunits. K(+) is required as a cofactor.

The protein resides in the cytoplasm. Functionally, exhibits a very high intrinsic GTPase hydrolysis rate. Involved in the addition of a carboxymethylaminomethyl (cmnm) group at the wobble position (U34) of certain tRNAs, forming tRNA-cmnm(5)s(2)U34. In Dechloromonas aromatica (strain RCB), this protein is tRNA modification GTPase MnmE.